The chain runs to 78 residues: Probable cytochrome c oxidase subunit 6B (78 aa).

The 44-residue stretch at 21–64 folds into the CHCH domain; sequence TKHCWANYVDYYGCVKHYNGDNSKCQTFFNSMNSLCPAAWISEW. The short motif at 24–34 is the Cx9C motif element; it reads CWANYVDYYGC. 2 cysteine pairs are disulfide-bonded: Cys-24-Cys-56 and Cys-34-Cys-45. The Cx10C motif signature appears at 45-56; the sequence is CQTFFNSMNSLC.

This sequence belongs to the cytochrome c oxidase subunit 6B family. As to quaternary structure, component of the cytochrome c oxidase (complex IV, CIV), a multisubunit enzyme composed of a catalytic core of 3 subunits and several supernumerary subunits. The complex exists as a monomer or a dimer and forms supercomplexes (SCs) in the inner mitochondrial membrane with ubiquinol-cytochrome c oxidoreductase (cytochrome b-c1 complex, complex III, CIII).

Its subcellular location is the mitochondrion inner membrane. It functions in the pathway energy metabolism; oxidative phosphorylation. Component of the cytochrome c oxidase, the last enzyme in the mitochondrial electron transport chain which drives oxidative phosphorylation. The respiratory chain contains 3 multisubunit complexes succinate dehydrogenase (complex II, CII), ubiquinol-cytochrome c oxidoreductase (cytochrome b-c1 complex, complex III, CIII) and cytochrome c oxidase (complex IV, CIV), that cooperate to transfer electrons derived from NADH and succinate to molecular oxygen, creating an electrochemical gradient over the inner membrane that drives transmembrane transport and the ATP synthase. Cytochrome c oxidase is the component of the respiratory chain that catalyzes the reduction of oxygen to water. Electrons originating from reduced cytochrome c in the intermembrane space (IMS) are transferred via the dinuclear copper A center (CU(A)) of subunit 2 and heme A of subunit 1 to the active site in subunit 1, a binuclear center (BNC) formed by heme A3 and copper B (CU(B)). The BNC reduces molecular oxygen to 2 water molecules using 4 electrons from cytochrome c in the IMS and 4 protons from the mitochondrial matrix. The polypeptide is Probable cytochrome c oxidase subunit 6B (Dictyostelium discoideum (Social amoeba)).